A 560-amino-acid polypeptide reads, in one-letter code: Zinc finger protein 619 (560 aa).

10 consecutive C2H2-type zinc fingers follow at residues Tyr-188–His-210, Tyr-216–His-238, Tyr-244–His-266, Tyr-272–His-294, Phe-300–His-322, Tyr-328–His-350, Tyr-356–His-378, Tyr-384–His-406, Tyr-412–His-434, and Tyr-440–His-462.

Belongs to the krueppel C2H2-type zinc-finger protein family.

It localises to the nucleus. Functionally, may be involved in transcriptional regulation. The sequence is that of Zinc finger protein 619 (ZNF619) from Homo sapiens (Human).